The following is a 423-amino-acid chain: Serine--tRNA ligase (423 aa).

Thr-230–Glu-232 contributes to the L-serine binding site. An ATP-binding site is contributed by Arg-261–Glu-263. Glu-284 contributes to the L-serine binding site. Glu-348–Ser-351 contributes to the ATP binding site. Ser-383 is a binding site for L-serine.

Belongs to the class-II aminoacyl-tRNA synthetase family. Type-1 seryl-tRNA synthetase subfamily. In terms of assembly, homodimer. The tRNA molecule binds across the dimer.

The protein resides in the cytoplasm. It catalyses the reaction tRNA(Ser) + L-serine + ATP = L-seryl-tRNA(Ser) + AMP + diphosphate + H(+). It carries out the reaction tRNA(Sec) + L-serine + ATP = L-seryl-tRNA(Sec) + AMP + diphosphate + H(+). It participates in aminoacyl-tRNA biosynthesis; selenocysteinyl-tRNA(Sec) biosynthesis; L-seryl-tRNA(Sec) from L-serine and tRNA(Sec): step 1/1. Functionally, catalyzes the attachment of serine to tRNA(Ser). Is also able to aminoacylate tRNA(Sec) with serine, to form the misacylated tRNA L-seryl-tRNA(Sec), which will be further converted into selenocysteinyl-tRNA(Sec). The polypeptide is Serine--tRNA ligase (Levilactobacillus brevis (strain ATCC 367 / BCRC 12310 / CIP 105137 / JCM 1170 / LMG 11437 / NCIMB 947 / NCTC 947) (Lactobacillus brevis)).